Reading from the N-terminus, the 319-residue chain is ATP-dependent 6-phosphofructokinase (319 aa).

Position 11 (Gly-11) interacts with ATP. 21–25 provides a ligand contact to ADP; sequence RAVAR. ATP is bound by residues 72-73 and 102-105; these read RY and GDGS. Asp-103 contributes to the Mg(2+) binding site. Residue 125–127 coordinates substrate; that stretch reads TID. The Proton acceptor role is filled by Asp-127. Arg-154 is a binding site for ADP. Substrate-binding positions include Arg-162 and 169-171; that span reads MGR. ADP contacts are provided by residues 185 to 187 and Arg-211; that span reads GAE. Substrate is bound by residues Glu-222, Arg-243, and 249–252; that span reads HIVR.

Belongs to the phosphofructokinase type A (PFKA) family. ATP-dependent PFK group I subfamily. Prokaryotic clade 'B1' sub-subfamily. In terms of assembly, homotetramer. Mg(2+) is required as a cofactor.

Its subcellular location is the cytoplasm. It carries out the reaction beta-D-fructose 6-phosphate + ATP = beta-D-fructose 1,6-bisphosphate + ADP + H(+). Its pathway is carbohydrate degradation; glycolysis; D-glyceraldehyde 3-phosphate and glycerone phosphate from D-glucose: step 3/4. With respect to regulation, allosterically activated by ADP and other diphosphonucleosides, and allosterically inhibited by phosphoenolpyruvate. In terms of biological role, catalyzes the phosphorylation of D-fructose 6-phosphate to fructose 1,6-bisphosphate by ATP, the first committing step of glycolysis. The chain is ATP-dependent 6-phosphofructokinase from Lacticaseibacillus casei (strain BL23) (Lactobacillus casei).